The sequence spans 341 residues: L-threonine 3-dehydrogenase (341 aa).

Cysteine 38 is a Zn(2+) binding site. Active-site charge relay system residues include threonine 40 and histidine 43. Zn(2+) is bound by residues histidine 63, glutamate 64, cysteine 93, cysteine 96, cysteine 99, and cysteine 107. NAD(+) is bound by residues isoleucine 175, aspartate 195, arginine 200, leucine 262 to isoleucine 264, and isoleucine 286 to tyrosine 287.

Belongs to the zinc-containing alcohol dehydrogenase family. In terms of assembly, homotetramer. Zn(2+) serves as cofactor.

Its subcellular location is the cytoplasm. It carries out the reaction L-threonine + NAD(+) = (2S)-2-amino-3-oxobutanoate + NADH + H(+). The protein operates within amino-acid degradation; L-threonine degradation via oxydo-reductase pathway; glycine from L-threonine: step 1/2. In terms of biological role, catalyzes the NAD(+)-dependent oxidation of L-threonine to 2-amino-3-ketobutyrate. This is L-threonine 3-dehydrogenase from Shewanella baltica (strain OS223).